The chain runs to 281 residues: Proteasome subunit beta (281 aa).

A propeptide spans 1 to 53 (MEANTRSTGRLPAAFLTPGSSSFMDFLGEHQPEMLPGNRQLPPVQGVIEAPHG) (removed in mature form; by autocatalysis). Thr54 serves as the catalytic Nucleophile.

Belongs to the peptidase T1B family. The 20S proteasome core is composed of 14 alpha and 14 beta subunits that assemble into four stacked heptameric rings, resulting in a barrel-shaped structure. The two inner rings, each composed of seven catalytic beta subunits, are sandwiched by two outer rings, each composed of seven alpha subunits. The catalytic chamber with the active sites is on the inside of the barrel. Has probably a gated structure, the ends of the cylinder being occluded by the N-termini of the alpha-subunits. Is likely capped by the proteasome-associated ATPase, ARC.

It is found in the cytoplasm. The catalysed reaction is Cleavage of peptide bonds with very broad specificity.. The protein operates within protein degradation; proteasomal Pup-dependent pathway. With respect to regulation, the formation of the proteasomal ATPase ARC-20S proteasome complex, likely via the docking of the C-termini of ARC into the intersubunit pockets in the alpha-rings, may trigger opening of the gate for substrate entry. Interconversion between the open-gate and close-gate conformations leads to a dynamic regulation of the 20S proteasome proteolysis activity. Peptidolytic activity is completely inhibited by lactacystin, and to a lesser extent, by N-acetyl-Leu-Leu-norleucinal (Ac-LLnL) and benzoyloxycarbonyl-Leu-Leu-Leu-vinylsulfone (Z-LLL-VS) in vitro. Its function is as follows. Component of the proteasome core, a large protease complex with broad specificity involved in protein degradation. The S.coelicolor proteasome is able to cleave oligopeptides after hydrophobic residues, but not after basic or acidic residues, thus displaying chymotrypsin-like activity but not trypsin-like activity. This Streptomyces coelicolor (strain ATCC BAA-471 / A3(2) / M145) protein is Proteasome subunit beta.